Consider the following 145-residue polypeptide: 3-hydroxyacyl-[acyl-carrier-protein] dehydratase FabZ (145 aa).

The active site involves His-47.

It belongs to the thioester dehydratase family. FabZ subfamily.

It localises to the cytoplasm. The catalysed reaction is a (3R)-hydroxyacyl-[ACP] = a (2E)-enoyl-[ACP] + H2O. Functionally, involved in unsaturated fatty acids biosynthesis. Catalyzes the dehydration of short chain beta-hydroxyacyl-ACPs and long chain saturated and unsaturated beta-hydroxyacyl-ACPs. In Methylobacillus flagellatus (strain ATCC 51484 / DSM 6875 / VKM B-1610 / KT), this protein is 3-hydroxyacyl-[acyl-carrier-protein] dehydratase FabZ.